Consider the following 360-residue polypeptide: DNA replication and repair protein RecF (360 aa).

Residue 30–37 participates in ATP binding; that stretch reads GENGAGKT.

The protein belongs to the RecF family.

The protein resides in the cytoplasm. Its function is as follows. The RecF protein is involved in DNA metabolism; it is required for DNA replication and normal SOS inducibility. RecF binds preferentially to single-stranded, linear DNA. It also seems to bind ATP. This is DNA replication and repair protein RecF from Deinococcus deserti (strain DSM 17065 / CIP 109153 / LMG 22923 / VCD115).